A 155-amino-acid chain; its full sequence is Regulatory protein RecX (155 aa).

The protein belongs to the RecX family.

The protein localises to the cytoplasm. In terms of biological role, modulates RecA activity. This chain is Regulatory protein RecX, found in Pseudomonas syringae pv. tomato (strain ATCC BAA-871 / DC3000).